The following is a 125-amino-acid chain: S-adenosylmethionine decarboxylase proenzyme (125 aa).

Residue serine 61 is the Schiff-base intermediate with substrate; via pyruvic acid of the active site. Serine 61 carries the post-translational modification Pyruvic acid (Ser); by autocatalysis. The active-site Proton acceptor; for processing activity is the histidine 66. The active-site Proton donor; for catalytic activity is cysteine 81.

The protein belongs to the prokaryotic AdoMetDC family. Type 1 subfamily. As to quaternary structure, heterotetramer of two alpha and two beta chains arranged as a dimer of alpha/beta heterodimers. Pyruvate is required as a cofactor. In terms of processing, is synthesized initially as an inactive proenzyme. Formation of the active enzyme involves a self-maturation process in which the active site pyruvoyl group is generated from an internal serine residue via an autocatalytic post-translational modification. Two non-identical subunits are generated from the proenzyme in this reaction, and the pyruvate is formed at the N-terminus of the alpha chain, which is derived from the carboxyl end of the proenzyme. The post-translation cleavage follows an unusual pathway, termed non-hydrolytic serinolysis, in which the side chain hydroxyl group of the serine supplies its oxygen atom to form the C-terminus of the beta chain, while the remainder of the serine residue undergoes an oxidative deamination to produce ammonia and the pyruvoyl group blocking the N-terminus of the alpha chain.

The catalysed reaction is S-adenosyl-L-methionine + H(+) = S-adenosyl 3-(methylsulfanyl)propylamine + CO2. Its pathway is amine and polyamine biosynthesis; S-adenosylmethioninamine biosynthesis; S-adenosylmethioninamine from S-adenosyl-L-methionine: step 1/1. In terms of biological role, catalyzes the decarboxylation of S-adenosylmethionine to S-adenosylmethioninamine (dcAdoMet), the propylamine donor required for the synthesis of the polyamines spermine and spermidine from the diamine putrescine. This Prochlorococcus marinus (strain MIT 9313) protein is S-adenosylmethionine decarboxylase proenzyme.